A 564-amino-acid chain; its full sequence is Pumilio homolog 9 (564 aa).

One can recognise a PUM-HD domain in the interval L222 to K564. Pumilio repeat units follow at residues E249 to L284, A285 to S320, V321 to K359, G361 to E396, A397 to A432, E433 to R469, M470 to R501, and E502 to A539.

Its subcellular location is the cytoplasm. In terms of biological role, sequence-specific RNA-binding protein that regulates translation and mRNA stability by binding the 3'-UTR of target mRNAs. The sequence is that of Pumilio homolog 9 (APUM9) from Arabidopsis thaliana (Mouse-ear cress).